A 207-amino-acid polypeptide reads, in one-letter code: MTAPNILILGIGNLLWADEGFGVRCVELLNERYRFPDGVRLMDGGTQGIYLVQHVQQADCLIVFDAVDYGLAPGTLKIVRDDEVPRFMGAKRMSLHQTGFQDVLALAAFSGAYPRELLLIGVQPEELEDFGGSLREPVRAQLEPALRVALEFLAERGVVAAARDGDAERLAPAPLALGRYEAGRPAEELAYRHGDIRFIPQQPLEDD.

The Ni(2+) site is built by glutamate 19, aspartate 65, and histidine 96.

The protein belongs to the peptidase A31 family.

Not known. Could be involved in the processing of hydrogenase. The sequence is that of Hydrogenase expression/formation protein HoxM (hoxM) from Azotobacter vinelandii.